A 452-amino-acid chain; its full sequence is Protein henna (452 aa).

Residues 36 to 107 (FSPKDSSLSS…EQCSYFNIIS (72 aa)) enclose the ACT domain. Serine 272 is modified (phosphoserine; by CaMK2). Fe cation contacts are provided by histidine 284, histidine 289, and glutamate 329.

Belongs to the biopterin-dependent aromatic amino acid hydroxylase family. The cofactor is Fe(2+). Phenylalanine hydrolase activity is found in yolk granules of embryos, and female abdomen and fat body tissues. Tryptophan hydroxylase is expressed in serotonergic neurons. Both enzymes are present in cuticular tissues.

The enzyme catalyses (6R)-L-erythro-5,6,7,8-tetrahydrobiopterin + L-phenylalanine + O2 = (4aS,6R)-4a-hydroxy-L-erythro-5,6,7,8-tetrahydrobiopterin + L-tyrosine. It carries out the reaction (6R)-L-erythro-5,6,7,8-tetrahydrobiopterin + L-tryptophan + O2 = 5-hydroxy-L-tryptophan + (4aS,6R)-4a-hydroxy-L-erythro-5,6,7,8-tetrahydrobiopterin. Its pathway is amino-acid degradation; L-phenylalanine degradation; acetoacetate and fumarate from L-phenylalanine: step 1/6. Its activity is regulated as follows. N-terminal region of PAH is thought to contain allosteric binding sites for phenylalanine and to constitute an 'inhibitory' domain that regulates the activity of a catalytic domain in the C-terminal portion of the molecule. The protein is Protein henna (Hn) of Drosophila melanogaster (Fruit fly).